Here is a 206-residue protein sequence, read N- to C-terminus: Dihydrofolate reductase (206 aa).

Positions 6–204 (SLTLIVALTT…FDYEFEMWTR (199 aa)) constitute a DHFR domain. NADP(+) contacts are provided by residues Ala-12 and 18–24 (GIGRSNS). Substrate is bound at residue 32–37 (EISYFK). 59 to 61 (RKT) contributes to the NADP(+) binding site. Substrate is bound at residue Arg-75. NADP(+) contacts are provided by residues 81 to 83 (TRN) and 124 to 131 (GGAQLYKA).

This sequence belongs to the dihydrofolate reductase family.

It catalyses the reaction (6S)-5,6,7,8-tetrahydrofolate + NADP(+) = 7,8-dihydrofolate + NADPH + H(+). Its pathway is cofactor biosynthesis; tetrahydrofolate biosynthesis; 5,6,7,8-tetrahydrofolate from 7,8-dihydrofolate: step 1/1. Functionally, key enzyme in folate metabolism. Catalyzes an essential reaction for de novo glycine and purine synthesis, and for DNA precursor synthesis. In Pneumocystis carinii, this protein is Dihydrofolate reductase.